The sequence spans 60 residues: DNA gyrase inhibitor YacG (60 aa).

Residues Cys15, Cys18, Cys30, and Cys34 each coordinate Zn(2+).

It belongs to the DNA gyrase inhibitor YacG family. Interacts with GyrB. It depends on Zn(2+) as a cofactor.

In terms of biological role, inhibits all the catalytic activities of DNA gyrase by preventing its interaction with DNA. Acts by binding directly to the C-terminal domain of GyrB, which probably disrupts DNA binding by the gyrase. The chain is DNA gyrase inhibitor YacG from Nitrobacter hamburgensis (strain DSM 10229 / NCIMB 13809 / X14).